The following is a 1406-amino-acid chain: DNA-directed RNA polymerase subunit beta' (1406 aa).

Positions 70, 72, 85, and 88 each coordinate Zn(2+). Residues Asp-460, Asp-462, and Asp-464 each coordinate Mg(2+). Cys-814, Cys-888, Cys-895, and Cys-898 together coordinate Zn(2+).

Belongs to the RNA polymerase beta' chain family. As to quaternary structure, the RNAP catalytic core consists of 2 alpha, 1 beta, 1 beta' and 1 omega subunit. When a sigma factor is associated with the core the holoenzyme is formed, which can initiate transcription. Mg(2+) is required as a cofactor. The cofactor is Zn(2+).

The enzyme catalyses RNA(n) + a ribonucleoside 5'-triphosphate = RNA(n+1) + diphosphate. Its function is as follows. DNA-dependent RNA polymerase catalyzes the transcription of DNA into RNA using the four ribonucleoside triphosphates as substrates. This is DNA-directed RNA polymerase subunit beta' from Photorhabdus laumondii subsp. laumondii (strain DSM 15139 / CIP 105565 / TT01) (Photorhabdus luminescens subsp. laumondii).